The sequence spans 277 residues: Acetyl-coenzyme A carboxylase carboxyl transferase subunit beta (277 aa).

The CoA carboxyltransferase N-terminal domain maps to 25-277; it reads LVRRCPVCHT…DLLRLHKGES (253 aa). The Zn(2+) site is built by Cys29, Cys32, Cys47, and Cys50. Residues 29–50 form a C4-type zinc finger; that stretch reads CPVCHTTFLTDHWEPTRLCPAC.

Belongs to the AccD/PCCB family. Acetyl-CoA carboxylase is a heterohexamer composed of biotin carboxyl carrier protein (AccB), biotin carboxylase (AccC) and two subunits each of ACCase subunit alpha (AccA) and ACCase subunit beta (AccD). Zn(2+) serves as cofactor.

It localises to the cytoplasm. It catalyses the reaction N(6)-carboxybiotinyl-L-lysyl-[protein] + acetyl-CoA = N(6)-biotinyl-L-lysyl-[protein] + malonyl-CoA. The protein operates within lipid metabolism; malonyl-CoA biosynthesis; malonyl-CoA from acetyl-CoA: step 1/1. Its function is as follows. Component of the acetyl coenzyme A carboxylase (ACC) complex. Biotin carboxylase (BC) catalyzes the carboxylation of biotin on its carrier protein (BCCP) and then the CO(2) group is transferred by the transcarboxylase to acetyl-CoA to form malonyl-CoA. This chain is Acetyl-coenzyme A carboxylase carboxyl transferase subunit beta, found in Levilactobacillus brevis (strain ATCC 367 / BCRC 12310 / CIP 105137 / JCM 1170 / LMG 11437 / NCIMB 947 / NCTC 947) (Lactobacillus brevis).